Here is a 692-residue protein sequence, read N- to C-terminus: Proprotein convertase subtilisin/kexin type 9 (692 aa).

Residues 1–30 (MGTVSSRRSWWPLPLPLLLLLLLGPAGARA) form the signal peptide. Residues 31–152 (QEDEDGDYEE…IEEDSSVFAQ (122 aa)) constitute a propeptide that is removed on maturation. Residue Y38 is modified to Sulfotyrosine. The residue at position 47 (S47) is a Phosphoserine. Residues 77–149 (TYVVVLKEET…VDYIEEDSSV (73 aa)) form the Inhibitor I9 domain. One can recognise a Peptidase S8 domain in the interval 155-444 (PWNLERITPA…VLTPNLVAAL (290 aa)). Active-site charge relay system residues include D186 and H226. Cystine bridges form between C223–C255 and C323–C358. S386 acts as the Charge relay system in catalysis. Positions 450 to 692 (RAGWQLFCRT…HLVQASQELQ (243 aa)) are C-terminal domain. Intrachain disulfides connect C457–C527, C477–C526, and C486–C509. N-linked (GlcNAc...) asparagine glycosylation occurs at N533. Intrachain disulfides connect C534-C601, C552-C600, C562-C588, C608-C679, C626-C678, and C635-C654. A Phosphoserine modification is found at S688.

It belongs to the peptidase S8 family. In terms of assembly, monomer. Can self-associate to form dimers and higher multimers which may have increased LDLR degrading activity. The precursor protein but not the mature protein may form multimers. Interacts with APOB, VLDLR, LRP8/APOER2 and BACE1. The full-length immature form (pro-PCSK9) interacts with SCNN1A, SCNN1B and SCNN1G. The pro-PCSK9 form (via C-terminal domain) interacts with LDLR. Interacts (via the C-terminal domain) with ANXA2 (via repeat Annexin 1); the interaction inhibits the degradation of LDLR. It depends on Ca(2+) as a cofactor. Cleavage by furin and PCSK5 generates a truncated inactive protein that is unable to induce LDLR degradation. Post-translationally, undergoes autocatalytic cleavage in the endoplasmic reticulum to release the propeptide from the N-terminus and the cleavage of the propeptide is strictly required for its maturation and activation. The cleaved propeptide however remains associated with the catalytic domain through non-covalent interactions, preventing potential substrates from accessing its active site. As a result, it is secreted from cells as a propeptide-containing, enzymatically inactive protein. In terms of processing, phosphorylation protects the propeptide against proteolysis.

Its subcellular location is the cytoplasm. The protein localises to the secreted. It is found in the endosome. It localises to the lysosome. The protein resides in the cell surface. Its subcellular location is the endoplasmic reticulum. The protein localises to the golgi apparatus. With respect to regulation, its proteolytic activity is autoinhibited by the non-covalent binding of the propeptide to the catalytic domain. Inhibited by EGTA. In terms of biological role, crucial player in the regulation of plasma cholesterol homeostasis. Binds to low-density lipid receptor family members: low density lipoprotein receptor (LDLR), very low density lipoprotein receptor (VLDLR), apolipoprotein E receptor (LRP1/APOER) and apolipoprotein receptor 2 (LRP8/APOER2), and promotes their degradation in intracellular acidic compartments. Acts via a non-proteolytic mechanism to enhance the degradation of the hepatic LDLR through a clathrin LDLRAP1/ARH-mediated pathway. May prevent the recycling of LDLR from endosomes to the cell surface or direct it to lysosomes for degradation. Can induce ubiquitination of LDLR leading to its subsequent degradation. Inhibits intracellular degradation of APOB via the autophagosome/lysosome pathway in a LDLR-independent manner. Involved in the disposal of non-acetylated intermediates of BACE1 in the early secretory pathway. Inhibits epithelial Na(+) channel (ENaC)-mediated Na(+) absorption by reducing ENaC surface expression primarily by increasing its proteasomal degradation. Regulates neuronal apoptosis via modulation of LRP8/APOER2 levels and related anti-apoptotic signaling pathways. The polypeptide is Proprotein convertase subtilisin/kexin type 9 (PCSK9) (Macaca mulatta (Rhesus macaque)).